We begin with the raw amino-acid sequence, 264 residues long: 3-methyl-2-oxobutanoate hydroxymethyltransferase (264 aa).

Asp45 and Asp84 together coordinate Mg(2+). 3-methyl-2-oxobutanoate contacts are provided by residues 45-46 (DS), Asp84, and Lys112. Mg(2+) is bound at residue Glu114. Glu181 (proton acceptor) is an active-site residue.

The protein belongs to the PanB family. Homodecamer; pentamer of dimers. It depends on Mg(2+) as a cofactor.

The protein localises to the cytoplasm. The enzyme catalyses 3-methyl-2-oxobutanoate + (6R)-5,10-methylene-5,6,7,8-tetrahydrofolate + H2O = 2-dehydropantoate + (6S)-5,6,7,8-tetrahydrofolate. It participates in cofactor biosynthesis; (R)-pantothenate biosynthesis; (R)-pantoate from 3-methyl-2-oxobutanoate: step 1/2. Functionally, catalyzes the reversible reaction in which hydroxymethyl group from 5,10-methylenetetrahydrofolate is transferred onto alpha-ketoisovalerate to form ketopantoate. In Vibrio parahaemolyticus serotype O3:K6 (strain RIMD 2210633), this protein is 3-methyl-2-oxobutanoate hydroxymethyltransferase.